The primary structure comprises 419 residues: S-adenosylmethionine synthase (419 aa).

An ATP-binding site is contributed by H15. D17 is a binding site for Mg(2+). E43 is a K(+) binding site. Positions 56 and 100 each coordinate L-methionine. Positions 100-110 are flexible loop; sequence QSPDIAQGVDE. ATP is bound by residues 171–173, 248–249, D257, 263–264, A280, and K284; these read DGK, KF, and RK. D257 is a binding site for L-methionine. Residue K288 participates in L-methionine binding.

This sequence belongs to the AdoMet synthase family. In terms of assembly, homotetramer; dimer of dimers. It depends on Mg(2+) as a cofactor. The cofactor is K(+).

It is found in the cytoplasm. It catalyses the reaction L-methionine + ATP + H2O = S-adenosyl-L-methionine + phosphate + diphosphate. Its pathway is amino-acid biosynthesis; S-adenosyl-L-methionine biosynthesis; S-adenosyl-L-methionine from L-methionine: step 1/1. Functionally, catalyzes the formation of S-adenosylmethionine (AdoMet) from methionine and ATP. The overall synthetic reaction is composed of two sequential steps, AdoMet formation and the subsequent tripolyphosphate hydrolysis which occurs prior to release of AdoMet from the enzyme. The protein is S-adenosylmethionine synthase of Synechococcus sp. (strain CC9311).